Reading from the N-terminus, the 201-residue chain is Recombination protein RecR (201 aa).

The segment at 57–72 adopts a C4-type zinc-finger fold; the sequence is CTHCRTFTEEESCAIC. One can recognise a Toprim domain in the interval 81–176; it reads GFLCVVEQPS…KVSRIAHGIP (96 aa).

This sequence belongs to the RecR family.

Functionally, may play a role in DNA repair. It seems to be involved in an RecBC-independent recombinational process of DNA repair. It may act with RecF and RecO. This is Recombination protein RecR from Histophilus somni (strain 2336) (Haemophilus somnus).